The chain runs to 404 residues: Aspergillopepsin-1 (404 aa).

The signal sequence occupies residues 1–20 (MVILSKVAAVAVGLSTVASA). Residues 21 to 77 (LPTGPSHSPHARRGFTINQITRQTARVGPKTASFPAIYSRALAKYGGTVPAHLKSAV) constitute a propeptide, activation peptide. Positions 95 to 401 (YLTPVNIGGT…DSQGPRLGFA (307 aa)) constitute a Peptidase A1 domain. Asp-111 is a catalytic residue. N-linked (GlcNAc...) asparagine glycosylation is present at Asn-140. Asp-293 is an active-site residue. A disulfide bridge connects residues Cys-329 and Cys-364.

It belongs to the peptidase A1 family. Monomer.

The protein resides in the secreted. The enzyme catalyses Hydrolysis of proteins with broad specificity. Generally favors hydrophobic residues in P1 and P1', but also accepts Lys in P1, which leads to activation of trypsinogen. Does not clot milk.. In terms of biological role, secreted aspartic endopeptidase that allows assimilation of proteinaceous substrates. The scissile peptide bond is attacked by a nucleophilic water molecule activated by two aspartic residues in the active site. Shows a broad primary substrate specificity. Favors hydrophobic residues at the P1 and P1' positions, but also accepts a lysine residue in the P1 position, leading to the activation of trypsinogen and chymotrypsinogen A. The sequence is that of Aspergillopepsin-1 (pepA) from Aspergillus flavus (strain ATCC 200026 / FGSC A1120 / IAM 13836 / NRRL 3357 / JCM 12722 / SRRC 167).